We begin with the raw amino-acid sequence, 119 residues long: Holo-[acyl-carrier-protein] synthase (119 aa).

Mg(2+) contacts are provided by D8 and E59.

This sequence belongs to the P-Pant transferase superfamily. AcpS family. Requires Mg(2+) as cofactor.

It is found in the cytoplasm. The enzyme catalyses apo-[ACP] + CoA = holo-[ACP] + adenosine 3',5'-bisphosphate + H(+). Functionally, transfers the 4'-phosphopantetheine moiety from coenzyme A to a Ser of acyl-carrier-protein. This Streptococcus agalactiae serotype Ia (strain ATCC 27591 / A909 / CDC SS700) protein is Holo-[acyl-carrier-protein] synthase.